Consider the following 565-residue polypeptide: MSEQKLAVNEYLKTDSDYLRGTIQEGLDTAVTGAFSEGDQQLIKFHGFYQQDDRDLRNERKEQKLEPLYSFMLRARVAGGVCSPEQWLAVDKIASNLTSSNSIRLTTRQTFQYHGIPKRNLKTIIQDLDREALDSIAACGDVNRNVMCNPNPVESKLHQQAYAYAKQLSDNMLPHTKAYAEIWLDDEKLVTTEGEEVEPVYGKTYLPRKFKMAVAVPPDNDVDVYTNDLGFVAVAEGDELVGFNMVAGGGMGSTHGEVSTFPRLADDFGYIKAEDTLKFAEAVMTIQRDWGNRENRKLSRLKYTIVKHGFESFKAEIEARTGIKFEPKRDVVIGDRGDRYGWKQGVDDNWHLTLFIEGGRVKDFPGQPLQTGLREIAKVHQGDFRMTSNQNIIIAGVPSADKALIEGLARQHGLLGKLITETRGHSIACVALPTCALAMAEAERYFPDFLTKVEALQEKHGFLDQGIVIRMTGCPNGCARPFAAEIGLVGKAPGRYNLYLGASFEGTRLNKLYRENIQEAEILAELDALFALYVAERQAGETFGNYTVRSGVVAAVLDAAKDFHG.

Positions 429, 435, 474, and 478 each coordinate [4Fe-4S] cluster. C478 provides a ligand contact to siroheme.

The protein belongs to the nitrite and sulfite reductase 4Fe-4S domain family. Alpha(8)-beta(8). The alpha component is a flavoprotein, the beta component is a hemoprotein. Siroheme serves as cofactor. The cofactor is [4Fe-4S] cluster.

The catalysed reaction is hydrogen sulfide + 3 NADP(+) + 3 H2O = sulfite + 3 NADPH + 4 H(+). It functions in the pathway sulfur metabolism; hydrogen sulfide biosynthesis; hydrogen sulfide from sulfite (NADPH route): step 1/1. Its function is as follows. Component of the sulfite reductase complex that catalyzes the 6-electron reduction of sulfite to sulfide. This is one of several activities required for the biosynthesis of L-cysteine from sulfate. This Shewanella pealeana (strain ATCC 700345 / ANG-SQ1) protein is Sulfite reductase [NADPH] hemoprotein beta-component.